A 412-amino-acid polypeptide reads, in one-letter code: Isovaleryl-CoA dehydrogenase, mitochondrial (412 aa).

The N-terminal 25 residues, 1–25 (MHKLFVARSVKSALFRIKNHQKPQF), are a transit peptide targeting the mitochondrion. FAD-binding positions include 154–163 (LAMSEPNAGS) and 187–189 (WCT). Ser-163 is a binding site for substrate. Substrate-binding positions include 209–210 (SK), Tyr-264, and 271–274 (DLER). The Proton acceptor role is filled by Glu-273. FAD is bound by residues Arg-299, Gln-310, and 367-371 (QCLGG). 394 to 395 (AG) lines the substrate pocket. 396–398 (TSE) provides a ligand contact to FAD.

The protein belongs to the acyl-CoA dehydrogenase family. As to quaternary structure, homotetramer. FAD is required as a cofactor. Expressed in flowers and tubers.

Its subcellular location is the mitochondrion. The enzyme catalyses 3-methylbutanoyl-CoA + oxidized [electron-transfer flavoprotein] + H(+) = 3-methylbut-2-enoyl-CoA + reduced [electron-transfer flavoprotein]. It functions in the pathway amino-acid degradation; L-leucine degradation; (S)-3-hydroxy-3-methylglutaryl-CoA from 3-isovaleryl-CoA: step 1/3. In terms of biological role, involved in the catabolism of amino acids. Uses isovaleryl-CoA as substrate. Minor activity detected with 2-methylpalmitoyl-CoA or 2-methylbutanoyl-CoA, but no activity with short- and medium-straight chain acyl-CoA esters or with 2-methylhexanoyl-CoA. The chain is Isovaleryl-CoA dehydrogenase, mitochondrial (IVD) from Solanum tuberosum (Potato).